A 169-amino-acid polypeptide reads, in one-letter code: Transcription regulatory protein SNF11 (169 aa).

A disordered region spans residues 1 to 24 (MSSEIAYSNTNTNTENENRNTGAG). Serine 2 is modified (N-acetylserine). The segment covering 9 to 21 (NTNTNTENENRNT) has biased composition (low complexity). Tandem repeats lie at residues 28-31 (NTNA), 32-35 (NANA), 36-39 (NATA), 40-43 (NATA), 44-47 (NATA), 48-51 (NATA), 76-80 (LLARV), and 160-165 (LLLARV). Residues 28-51 (NTNANANANATANATANATANATA) form a 6 X 4 AA tandem repeats of N-[AT]-[NT]-A region. Residues 76 to 165 (LLARVIQMNN…SKLYLLLARV (90 aa)) form a 2 X 5 AA repeats of L-L-A-R-V region.

As to quaternary structure, component of the SWI/SNF global transcription activator complex. The 1.14 MDa SWI/SNF complex is composed of 11 different subunits: one copy each of SWI1, SNF2/SWI2, SNF5, SNF12/SWP73, ARP7/SWP61, ARP9/SWP59; two copies each of SWI3, SNF6, SNF11, SWP82; and three copies of TAF14/SWP29.

It is found in the nucleus. Functionally, involved in transcriptional activation. Component of the SWI/SNF complex, an ATP-dependent chromatin remodeling complex, which is required for the positive and negative regulation of gene expression of a large number of genes. It changes chromatin structure by altering DNA-histone contacts within a nucleosome, leading eventually to a change in nucleosome position, thus facilitating or repressing binding of gene-specific transcription factors. The sequence is that of Transcription regulatory protein SNF11 (SNF11) from Saccharomyces cerevisiae (strain ATCC 204508 / S288c) (Baker's yeast).